The sequence spans 369 residues: Putative agmatine deiminase (369 aa).

Cys355 serves as the catalytic Amidino-cysteine intermediate.

The protein belongs to the agmatine deiminase family.

The catalysed reaction is agmatine + H2O = N-carbamoylputrescine + NH4(+). The chain is Putative agmatine deiminase from Marinomonas sp. (strain MWYL1).